Reading from the N-terminus, the 331-residue chain is 6-phosphogluconolactonase (331 aa).

The protein belongs to the cycloisomerase 2 family.

It catalyses the reaction 6-phospho-D-glucono-1,5-lactone + H2O = 6-phospho-D-gluconate + H(+). It participates in carbohydrate degradation; pentose phosphate pathway; D-ribulose 5-phosphate from D-glucose 6-phosphate (oxidative stage): step 2/3. Its function is as follows. Catalyzes the hydrolysis of 6-phosphogluconolactone to 6-phosphogluconate. This Salmonella typhi protein is 6-phosphogluconolactonase.